The sequence spans 278 residues: Large ribosomal subunit protein uL2 (278 aa).

Residues 224 to 262 (VMNPVDHPLGGGEGRTSGGRHPVTPWGKPTKGFKTRKTR) are disordered.

It belongs to the universal ribosomal protein uL2 family. Part of the 50S ribosomal subunit. Forms a bridge to the 30S subunit in the 70S ribosome.

One of the primary rRNA binding proteins. Required for association of the 30S and 50S subunits to form the 70S ribosome, for tRNA binding and peptide bond formation. It has been suggested to have peptidyltransferase activity; this is somewhat controversial. Makes several contacts with the 16S rRNA in the 70S ribosome. This chain is Large ribosomal subunit protein uL2, found in Leptospira biflexa serovar Patoc (strain Patoc 1 / Ames).